A 245-amino-acid chain; its full sequence is Chromosome partition protein MukE (245 aa).

The interval 213–245 (PESIAAEKATADDESAVSNEEDFEYDDNQEGAE) is disordered. The span at 224–245 (DDESAVSNEEDFEYDDNQEGAE) shows a compositional bias: acidic residues.

The protein belongs to the MukE family. In terms of assembly, interacts, and probably forms a ternary complex, with MukF and MukB. The complex formation is stimulated by calcium or magnesium.

It is found in the cytoplasm. Its subcellular location is the nucleoid. Its function is as follows. Involved in chromosome condensation, segregation and cell cycle progression. May participate in facilitating chromosome segregation by condensation DNA from both sides of a centrally located replisome during cell division. Probably acts via its interaction with MukB and MukF. The polypeptide is Chromosome partition protein MukE (Actinobacillus succinogenes (strain ATCC 55618 / DSM 22257 / CCUG 43843 / 130Z)).